The primary structure comprises 429 residues: 3-isopropylmalate dehydratase large subunit (429 aa).

3 residues coordinate [4Fe-4S] cluster: Cys-303, Cys-363, and Cys-366.

It belongs to the aconitase/IPM isomerase family. LeuC type 2 subfamily. As to quaternary structure, heterodimer of LeuC and LeuD. Requires [4Fe-4S] cluster as cofactor.

It catalyses the reaction (2R,3S)-3-isopropylmalate = (2S)-2-isopropylmalate. The protein operates within amino-acid biosynthesis; L-leucine biosynthesis; L-leucine from 3-methyl-2-oxobutanoate: step 2/4. Functionally, catalyzes the isomerization between 2-isopropylmalate and 3-isopropylmalate, via the formation of 2-isopropylmaleate. The polypeptide is 3-isopropylmalate dehydratase large subunit (Caldicellulosiruptor saccharolyticus (strain ATCC 43494 / DSM 8903 / Tp8T 6331)).